A 168-amino-acid chain; its full sequence is tRNA-splicing endonuclease (168 aa).

Catalysis depends on residues Tyr-107, His-114, and Lys-145.

This sequence belongs to the tRNA-intron endonuclease family. Archaeal short subfamily. Homotetramer; although the tetramer contains four active sites, only two participate in the cleavage. Therefore, it should be considered as a dimer of dimers.

The enzyme catalyses pretRNA = a 3'-half-tRNA molecule with a 5'-OH end + a 5'-half-tRNA molecule with a 2',3'-cyclic phosphate end + an intron with a 2',3'-cyclic phosphate and a 5'-hydroxyl terminus.. Endonuclease that removes tRNA introns. Cleaves pre-tRNA at the 5'- and 3'-splice sites to release the intron. The products are an intron and two tRNA half-molecules bearing 2',3' cyclic phosphate and 5'-OH termini. Recognizes a pseudosymmetric substrate in which 2 bulged loops of 3 bases are separated by a stem of 4 bp. This Thermococcus gammatolerans (strain DSM 15229 / JCM 11827 / EJ3) protein is tRNA-splicing endonuclease.